Here is a 117-residue protein sequence, read N- to C-terminus: ATP-dependent Clp protease adapter protein ClpS 1 (117 aa).

The protein belongs to the ClpS family. As to quaternary structure, binds to the N-terminal domain of the chaperone ClpA.

Functionally, involved in the modulation of the specificity of the ClpAP-mediated ATP-dependent protein degradation. This is ATP-dependent Clp protease adapter protein ClpS 1 from Agrobacterium fabrum (strain C58 / ATCC 33970) (Agrobacterium tumefaciens (strain C58)).